The sequence spans 431 residues: RbAp48-related WD40 repeat-containing protein prw1 (431 aa).

WD repeat units follow at residues 127–159 (SHPESVCSAKLMPQDDSCVATVGNYHNDVLVFD), 182–213 (KHTQPCTSVCWNFLSKGTLVSGSQDATLSCWD), 232–263 (SHEKQVSDVRFHYKHQDLLASVSYDQYLHVHD), 279–310 (AHSGPIHSVAFNPHNDFILATCSTDKTIALWD), 323–354 (GHEDIVTKISFSPHEEPILASTSADRRTLVWD), and 380–411 (GHTSCTIDMDWCPNYNWTMATAAEDNILQIWT).

It belongs to the WD repeat HIR1 family. As to quaternary structure, heterotetramer of alp13, clr6, prw1 and pst2.

The protein resides in the nucleus. Functionally, has a role in chromatin assembly and chromosome segregation. Involved in the deacetylation of histones. The sequence is that of RbAp48-related WD40 repeat-containing protein prw1 (prw1) from Schizosaccharomyces pombe (strain 972 / ATCC 24843) (Fission yeast).